The primary structure comprises 162 residues: Protein-export protein SecB 2 (162 aa).

This sequence belongs to the SecB family. Homotetramer, a dimer of dimers. One homotetramer interacts with 1 SecA dimer.

It is found in the cytoplasm. In terms of biological role, one of the proteins required for the normal export of preproteins out of the cell cytoplasm. It is a molecular chaperone that binds to a subset of precursor proteins, maintaining them in a translocation-competent state. It also specifically binds to its receptor SecA. The sequence is that of Protein-export protein SecB 2 from Polaromonas naphthalenivorans (strain CJ2).